A 334-amino-acid chain; its full sequence is Cathepsin J (334 aa).

The first 17 residues, 1-17 (MTPAVFLVILCFGVASG), serve as a signal peptide directing secretion. Positions 18-113 (APARDPNLDA…PSAQKQVSIG (96 aa)) are cleaved as a propeptide — activation peptide. Cys-138 is a catalytic residue. N-linked (GlcNAc...) asparagine glycosylation is found at Asn-217, Asn-221, and Asn-268. Cys-269 and Cys-322 are joined by a disulfide. The active site involves His-276. Asn-288 carries N-linked (GlcNAc...) asparagine glycosylation. The active site involves Asn-300.

The protein belongs to the peptidase C1 family. In terms of tissue distribution, expressed specifically in placenta.

It localises to the lysosome. This is Cathepsin J (Ctsj) from Rattus norvegicus (Rat).